An 831-amino-acid polypeptide reads, in one-letter code: Protein translocase subunit SecA (831 aa).

ATP contacts are provided by residues glutamine 88, 106–110 (GEGKT), and aspartate 495. Positions 816, 818, 827, and 828 each coordinate Zn(2+).

The protein belongs to the SecA family. Monomer and homodimer. Part of the essential Sec protein translocation apparatus which comprises SecA, SecYEG and auxiliary proteins SecDF-YajC and YidC. It depends on Zn(2+) as a cofactor.

It localises to the cell membrane. Its subcellular location is the cytoplasm. It carries out the reaction ATP + H2O + cellular proteinSide 1 = ADP + phosphate + cellular proteinSide 2.. Part of the Sec protein translocase complex. Interacts with the SecYEG preprotein conducting channel. Has a central role in coupling the hydrolysis of ATP to the transfer of proteins into and across the cell membrane, serving as an ATP-driven molecular motor driving the stepwise translocation of polypeptide chains across the membrane. This is Protein translocase subunit SecA from Lawsonia intracellularis (strain PHE/MN1-00).